We begin with the raw amino-acid sequence, 1558 residues long: Hybrid PKS-NRPS synthetase TAS1 (1558 aa).

The tract at residues 27 to 392 (YPMTKAQESL…RGLETPRAQV (366 aa)) is condensation (C) domain. The interval 522 to 919 (TYKELNERSN…TITDVMPEVT (398 aa)) is adenylation (A) domain. The interval 995 to 1028 (TSGSSSSATPSLVSSGSTTCRSPSTSSCSDSRSA) is disordered. The Carrier domain maps to 1027-1104 (SASPAITSAV…GQVDLLCGSE (78 aa)). S1063 is subject to O-(pantetheine 4'-phosphoryl)serine. The segment at 1116–1144 (LGRGRTKSPAKIVDSQGRSSPSTIPSGGR) is disordered. Residues 1131 to 1140 (QGRSSPSTIP) are compositionally biased toward polar residues. The 414-residue stretch at 1145-1558 (KSEIAIVGIS…GVNAHCVLRS (414 aa)) folds into the Ketosynthase family 3 (KS3) domain. Catalysis depends on for beta-ketoacyl synthase activity residues C1308, H1444, and N1484.

This sequence in the N-terminal section; belongs to the NRP synthetase family. It depends on pantetheine 4'-phosphate as a cofactor.

It carries out the reaction acetoacetyl-CoA + L-isoleucine + ATP = tenuazonic acid + AMP + diphosphate + CoA + 2 H(+). Hybrid PKS-NRPS synthetase that mediates the biosynthesis of the toxin tenuazonic acid (TeA), an inhibitor of protein biosynthesis on ribosomes by suppressing the release of new protein. TAS1 alone is sufficient for TeA synthesis via the condensation of isoleucine (Ile) with acetoacetyl-CoA by the N-terminal NRPS module and subsequent cyclization conducted by the C-terminal KS domain. The protein is Hybrid PKS-NRPS synthetase TAS1 of Gloeophyllum trabeum (strain ATCC 11539 / FP-39264 / Madison 617) (Brown rot fungus).